The primary structure comprises 427 residues: Enolase (427 aa).

Position 163 (Q163) interacts with (2R)-2-phosphoglycerate. The active-site Proton donor is E205. Mg(2+) contacts are provided by D242, E288, and D315. (2R)-2-phosphoglycerate contacts are provided by K340, R369, S370, and K391. The active-site Proton acceptor is the K340.

It belongs to the enolase family. Requires Mg(2+) as cofactor.

It localises to the cytoplasm. Its subcellular location is the secreted. The protein resides in the cell surface. It carries out the reaction (2R)-2-phosphoglycerate = phosphoenolpyruvate + H2O. It participates in carbohydrate degradation; glycolysis; pyruvate from D-glyceraldehyde 3-phosphate: step 4/5. Catalyzes the reversible conversion of 2-phosphoglycerate (2-PG) into phosphoenolpyruvate (PEP). It is essential for the degradation of carbohydrates via glycolysis. The protein is Enolase of Amoebophilus asiaticus (strain 5a2).